The following is an 80-amino-acid chain: Defensin-like protein 291 (80 aa).

Residues 1 to 29 form the signal peptide; sequence MAASKTTIFIVFVLCLSCTLLVNISGIQA. Disulfide bonds link cysteine 50-cysteine 70, cysteine 56-cysteine 75, and cysteine 62-cysteine 77.

Belongs to the DEFL family.

The protein localises to the secreted. In Arabidopsis thaliana (Mouse-ear cress), this protein is Defensin-like protein 291.